A 398-amino-acid chain; its full sequence is Elongation factor Tu (398 aa).

The tr-type G domain occupies 10–207; the sequence is KPHVNIGTIG…TVDDYIPDPE (198 aa). A G1 region spans residues 19–26; it reads GHVDHGKT. 19-26 provides a ligand contact to GTP; sequence GHVDHGKT. Threonine 26 is a Mg(2+) binding site. A G2 region spans residues 63–67; sequence GITIN. The tract at residues 84 to 87 is G3; the sequence is DAPG. GTP contacts are provided by residues 84-88 and 139-142; these read DAPGH and NKVD. A G4 region spans residues 139–142; it reads NKVD. The interval 177 to 179 is G5; the sequence is SAL.

Belongs to the TRAFAC class translation factor GTPase superfamily. Classic translation factor GTPase family. EF-Tu/EF-1A subfamily. As to quaternary structure, monomer.

It localises to the cytoplasm. The enzyme catalyses GTP + H2O = GDP + phosphate + H(+). Its function is as follows. GTP hydrolase that promotes the GTP-dependent binding of aminoacyl-tRNA to the A-site of ribosomes during protein biosynthesis. The protein is Elongation factor Tu of Streptococcus mutans serotype c (strain ATCC 700610 / UA159).